The primary structure comprises 75 residues: Large ribosomal subunit protein bL31 (75 aa).

It belongs to the bacterial ribosomal protein bL31 family. Type A subfamily. Part of the 50S ribosomal subunit.

Binds the 23S rRNA. The chain is Large ribosomal subunit protein bL31 from Bradyrhizobium sp. (strain BTAi1 / ATCC BAA-1182).